The following is a 271-amino-acid chain: MPKTKKAKDEKSAKKDKKHIAGDEKGLDFARAWVEFPDPADDEQVFRCDLTWLTSRWNCIFGSGCQGIQAGRADDGCCSLGAHFSDEDDEKRVAGHVARLTPDIWQHHAEGTRNGWTSEDDEGSRQTRPFQGSCIFQNRPGFAGGAGCSLHILALKEGREPLETKPDVCWQLPVRRTYEWIDRPDDTRVLQVSIGEYDRRGWGPGGHDLHWWCTSATSAHGAGDPVYVSYRPELVELMGKAGYDRLVELCEERLASQLPLLAPHPADPAGR.

Disordered stretches follow at residues 1–21 (MPKT…KHIA) and 109–130 (AEGT…TRPF). The span at 7–21 (AKDEKSAKKDKKHIA) shows a compositional bias: basic and acidic residues.

Belongs to the Rv0495c family.

Functionally, essential for maintaining intracellular redox homeostasis. The chain is Probable redox regulatory protein SCO3349 from Streptomyces coelicolor (strain ATCC BAA-471 / A3(2) / M145).